The sequence spans 340 residues: Ferredoxin--NADP reductase (340 aa).

Residues Asp-33, Gln-41, Tyr-46, Ala-86, Phe-120, Asp-286, and Thr-327 each coordinate FAD.

The protein belongs to the ferredoxin--NADP reductase type 2 family. As to quaternary structure, homodimer. Requires FAD as cofactor.

The enzyme catalyses 2 reduced [2Fe-2S]-[ferredoxin] + NADP(+) + H(+) = 2 oxidized [2Fe-2S]-[ferredoxin] + NADPH. This Rickettsia rickettsii (strain Sheila Smith) protein is Ferredoxin--NADP reductase.